Reading from the N-terminus, the 89-residue chain is Small ribosomal subunit protein uS14A (89 aa).

Belongs to the universal ribosomal protein uS14 family. As to quaternary structure, part of the 30S ribosomal subunit. Contacts proteins S3 and S10.

Its function is as follows. Binds 16S rRNA, required for the assembly of 30S particles and may also be responsible for determining the conformation of the 16S rRNA at the A site. The sequence is that of Small ribosomal subunit protein uS14A from Oceanobacillus iheyensis (strain DSM 14371 / CIP 107618 / JCM 11309 / KCTC 3954 / HTE831).